A 131-amino-acid chain; its full sequence is Colicin-N immunity protein (131 aa).

The next 2 membrane-spanning stretches (helical) occupy residues 66-84 (ILTP…FLLT) and 104-124 (VFVF…IFVL).

It is found in the cell membrane. In Escherichia coli, this protein is Colicin-N immunity protein (cni).